Consider the following 1052-residue polypeptide: Swarming motility protein SwrC (1052 aa).

The protein belongs to the resistance-nodulation-cell division (RND) (TC 2.A.6) family.

Functionally, required for self-resistance to surfactin, an antimicrobial lipopeptide surfactant produced by B.subtilis. Also required for swarming motility. This is Swarming motility protein SwrC (swrC) from Bacillus subtilis (strain 168).